The primary structure comprises 674 residues: Forkhead box protein P1 (674 aa).

The span at 1–19 (MMQESGTETKSNGSAIQNG) shows a compositional bias: polar residues. Residues 1–44 (MMQESGTETKSNGSAIQNGSSGGNHLLECGSLREGRSNGETPAV) form a disordered region. A Phosphoserine modification is found at Ser-82. Polar residues predominate over residues 269 to 281 (MNPHASTNGQLSV). The disordered stretch occupies residues 269-296 (MNPHASTNGQLSVHTPKRESLSHEEHPH). Basic and acidic residues predominate over residues 284-296 (PKRESLSHEEHPH). Residue Lys-285 forms a Glycyl lysine isopeptide (Lys-Gly) (interchain with G-Cter in SUMO2) linkage. The C2H2-type zinc-finger motif lies at 304 to 329 (GVCKWPGCEAVCEDFQSFLKHLNSEH). The interval 346–367 (VQQLELQLAKDKERLQAMMTHL) is leucine-zipper. Residues Lys-370 and Lys-375 each participate in a glycyl lysine isopeptide (Lys-Gly) (interchain with G-Cter in SUMO2) cross-link. Residues 380-384 (PLNLV) are CTBP1-binding. Over residues 388 to 401 (TLSKSASEASPQSL) the composition is skewed to polar residues. Positions 388–427 (TLSKSASEASPQSLPHTPTTPTAPITPATQGPSVITTTSM) are disordered. Over residues 402-419 (PHTPTTPTAPITPATQGP) the composition is skewed to low complexity. Lys-440 is covalently cross-linked (Glycyl lysine isopeptide (Lys-Gly) (interchain with G-Cter in SUMO2)). The fork-head DNA-binding region spans 462 to 552 (RPPFTYASLI…PQKISGNPSL (91 aa)). The disordered stretch occupies residues 608 to 674 (EHTNSNESDS…EDEPVNEDME (67 aa)). The segment covering 609–620 (HTNSNESDSSPG) has biased composition (polar residues). Position 650 is a phosphothreonine (Thr-650). Residue Ser-655 is modified to Phosphoserine. The span at 664–674 (YEDEPVNEDME) shows a compositional bias: acidic residues.

In terms of assembly, forms homodimers and heterodimers with FOXP2 and FOXP4. Dimerization is required for DNA-binding. Self-associates. Interacts with CTBP1. Interacts with NCOR2 and AR. Interacts with FOXP2. Interacts with TBR1. Interacts with AURKA; this interaction facilitates the phosphorylation of FOXP1, which suppresses the expression of FBXL7. Interacts with ZMYM2.

The protein localises to the nucleus. In terms of biological role, transcriptional repressor. Can act with CTBP1 to synergistically repress transcription but CTPBP1 is not essential. Plays an important role in the specification and differentiation of lung epithelium. Acts cooperatively with FOXP4 to regulate lung secretory epithelial cell fate and regeneration by restricting the goblet cell lineage program; the function may involve regulation of AGR2. Essential transcriptional regulator of B-cell development. Involved in regulation of cardiac muscle cell proliferation. Involved in the columnar organization of spinal motor neurons. Promotes the formation of the lateral motor neuron column (LMC) and the preganglionic motor column (PGC) and is required for respective appropriate motor axon projections. The segment-appropriate generation of spinal cord motor columns requires cooperation with other Hox proteins. Can regulate PITX3 promoter activity; may promote midbrain identity in embryonic stem cell-derived dopamine neurons by regulating PITX3. Negatively regulates the differentiation of T follicular helper cells T(FH)s. Involved in maintenance of hair follicle stem cell quiescence; the function probably involves regulation of FGF18. Represses transcription of various pro-apoptotic genes and cooperates with NF-kappa B-signaling in promoting B-cell expansion by inhibition of caspase-dependent apoptosis. Binds to CSF1R promoter elements and is involved in regulation of monocyte differentiation and macrophage functions; repression of CSF1R in monocytes seems to involve NCOR2 as corepressor. Involved in endothelial cell proliferation, tube formation and migration indicative for a role in angiogenesis; the role in neovascularization seems to implicate suppression of SEMA5B. Can negatively regulate androgen receptor signaling. Acts as a transcriptional activator of the FBXL7 promoter; this activity is regulated by AURKA. The chain is Forkhead box protein P1 (FOXP1) from Bos taurus (Bovine).